Reading from the N-terminus, the 130-residue chain is Trypsin inhibitor (130 aa).

The tract at residues 27–49 (LHKQARQSGSGPSPQGPQQRPPL) is disordered. Residues 32-49 (RQSGSGPSPQGPQQRPPL) show a composition bias toward low complexity.

It belongs to the 2S seed storage albumins family. The protein consists of two chains linked by disulfide bonds.

Functionally, inhibits trypsin with a Ki of 7 x 10(-6) M. The chain is Trypsin inhibitor from Mutarda arvensis (Charlock mustard).